The sequence spans 68 residues: MRTSYLLLFTLCLLLSEMASGDNFLTGLGHRSDHYICVRSGGQCLYSACPIYTKIQGTCYHGKAKCCK.

The first 21 residues, M1 to G21, serve as a signal peptide directing secretion. The propeptide occupies D22–S32. 3 disulfides stabilise this stretch: C37/C66, C44/C59, and C49/C67.

The protein belongs to the beta-defensin family. In terms of assembly, monomer. Homodimer.

It is found in the secreted. It localises to the membrane. Has bactericidal activity. May act as a ligand for C-C chemokine receptor CCR6. Positively regulates the sperm motility and bactericidal activity in a CCR6-dependent manner. Binds to CCR6 and triggers Ca2+ mobilization in the sperm which is important for its motility. The protein is Beta-defensin 1 (DEFB1) of Cercopithecus erythrogaster (Red-bellied monkey).